We begin with the raw amino-acid sequence, 442 residues long: ATP-dependent protease ATPase subunit HslU (442 aa).

Residues I18, 60–65, D255, E320, and R392 each bind ATP; that span reads GVGKTE.

The protein belongs to the ClpX chaperone family. HslU subfamily. A double ring-shaped homohexamer of HslV is capped on each side by a ring-shaped HslU homohexamer. The assembly of the HslU/HslV complex is dependent on binding of ATP.

The protein localises to the cytoplasm. Its function is as follows. ATPase subunit of a proteasome-like degradation complex; this subunit has chaperone activity. The binding of ATP and its subsequent hydrolysis by HslU are essential for unfolding of protein substrates subsequently hydrolyzed by HslV. HslU recognizes the N-terminal part of its protein substrates and unfolds these before they are guided to HslV for hydrolysis. The sequence is that of ATP-dependent protease ATPase subunit HslU from Aeromonas hydrophila subsp. hydrophila (strain ATCC 7966 / DSM 30187 / BCRC 13018 / CCUG 14551 / JCM 1027 / KCTC 2358 / NCIMB 9240 / NCTC 8049).